A 1819-amino-acid polypeptide reads, in one-letter code: Protein REDUCED CHLOROPLAST COVERAGE 2 (1819 aa).

Basic residues predominate over residues 1 to 17; the sequence is MAPKAGKTKPHKSKGEK. 4 disordered regions span residues 1-23, 128-180, 595-619, and 634-664; these read MAPKAGKTKPHKSKGEKKKKEEK, KPPV…GACE, QASSKSESKKTEDPKPEPAVKGLGK, and KANKTEQGKEAPANDTDNTSETEDQKELEKQ. 2 stretches are compositionally biased toward basic and acidic residues: residues 135–145 and 600–612; these read LPKDSEKKESG and SESKKTEDPKPEP. The region spanning 329 to 603 is the Clu domain; sequence EDETWGGDGG…NQASSKSESK (275 aa). Residues 649-680 are a coiled coil; sequence TDNTSETEDQKELEKQNEEIEKMWKELVTETA. 5 TPR repeats span residues 892–925, 934–967, 976–1009, 1018–1051, and 1060–1093; these read GRTLLESSKTSLDKGKLEDAVNYGTKALAKLVAV, AGAYSLLAVVLYHTGDFNQATIYQQKALDINERE, MKSYGDLAVFYYRLQHTELALKYVNRALYLLHLT, AATYINVAMMEEGMKNAHVALRYLHEALKCNQRL, and AASYHAIAIALSLMDAYSLSVQHEQTTLQILQAK. 6 disordered regions span residues 1152–1360, 1413–1456, 1468–1513, 1527–1573, 1616–1670, and 1731–1809; these read SGIK…PMLS, KVNA…SPKE, KAFP…SESV, LKTV…ASAP, STPH…PRIM, and LVSE…DYSD. Composition is skewed to basic and acidic residues over residues 1199–1224 and 1230–1239; these read SSDKENKSETKSEEKKVENFDLEQSK and KLVKPEATVH. Residue Ser1244 is modified to Phosphoserine. Polar residues predominate over residues 1269-1313; that stretch reads KLNTNFMNVTQQPSRSRGKSTNFTSPRTSSNELSISVAGSTSSPA. At Ser1320 the chain carries Phosphoserine. The span at 1343-1354 shows a compositional bias: polar residues; that stretch reads LASSACTEQINK. 2 stretches are compositionally biased toward polar residues: residues 1496-1511 and 1536-1546; these read CLLNKSPTANDSNGSE and NLPNGDSSPKS. The segment covering 1551 to 1566 has biased composition (basic and acidic residues); that stretch reads DGEKQDACEAQKEMSK. The segment covering 1650-1665 has biased composition (polar residues); sequence SFPNSTESNGEANQFN. The segment covering 1742-1759 has biased composition (basic and acidic residues); the sequence is SEEKSGSEEESNNDKNAG. The span at 1767-1778 shows a compositional bias: polar residues; sequence QETTDTPENGHS. The segment covering 1785 to 1800 has biased composition (basic and acidic residues); that stretch reads TTSHETCDEKNGERQG.

Expressed in the non-epidermal tissues of the true leaves. Not detected in the vegetative shoot meristem and leaf primordia.

It localises to the nucleus. Its subcellular location is the cytoplasm. It is found in the cytosol. Functionally, negatively regulates meristematic tissue proliferation by integrating developmental signals with carbon source availability. May act as the scaffold of a protein complex, which sequesters key factors that are required for the G2 to M transition in meristematic tissues. Together with REC2, REC3 and FMT/CLU, contributes to the establishment of the cellular volume devoted to the chloroplast compartment. This Arabidopsis thaliana (Mouse-ear cress) protein is Protein REDUCED CHLOROPLAST COVERAGE 2.